A 223-amino-acid polypeptide reads, in one-letter code: Cytidylate kinase (223 aa).

12 to 20 (GPAGSGKST) lines the ATP pocket.

The protein belongs to the cytidylate kinase family. Type 1 subfamily.

The protein localises to the cytoplasm. The enzyme catalyses CMP + ATP = CDP + ADP. The catalysed reaction is dCMP + ATP = dCDP + ADP. The chain is Cytidylate kinase from Onion yellows phytoplasma (strain OY-M).